Here is a 313-residue protein sequence, read N- to C-terminus: tRNA dimethylallyltransferase (313 aa).

9–16 serves as a coordination point for ATP; that stretch reads GPTASGKT. Residue 11-16 coordinates substrate; sequence TASGKT. The interaction with substrate tRNA stretch occupies residues 34–37; the sequence is DSMQ.

The protein belongs to the IPP transferase family. As to quaternary structure, monomer. Requires Mg(2+) as cofactor.

The catalysed reaction is adenosine(37) in tRNA + dimethylallyl diphosphate = N(6)-dimethylallyladenosine(37) in tRNA + diphosphate. Its function is as follows. Catalyzes the transfer of a dimethylallyl group onto the adenine at position 37 in tRNAs that read codons beginning with uridine, leading to the formation of N6-(dimethylallyl)adenosine (i(6)A). The protein is tRNA dimethylallyltransferase of Acetivibrio thermocellus (strain ATCC 27405 / DSM 1237 / JCM 9322 / NBRC 103400 / NCIMB 10682 / NRRL B-4536 / VPI 7372) (Clostridium thermocellum).